A 295-amino-acid polypeptide reads, in one-letter code: Methylamine utilization protein MauJ (295 aa).

The protein operates within one-carbon metabolism; methylamine degradation. This chain is Methylamine utilization protein MauJ (mauJ), found in Methylorubrum extorquens (strain ATCC 14718 / DSM 1338 / JCM 2805 / NCIMB 9133 / AM1) (Methylobacterium extorquens).